Here is a 511-residue protein sequence, read N- to C-terminus: Coatomer subunit delta (511 aa).

A compositionally biased stretch (basic and acidic residues) spans 168 to 177; sequence QARRDAERQG. Residues 168-196 form a disordered region; the sequence is QARRDAERQGKKAPGFGGFGSSTVSGGST. Phosphoserine is present on serine 223. Residues lysine 233 and lysine 241 each carry the N6-acetyllysine modification. Phosphoserine is present on serine 244. An MHD domain is found at 271–511; that stretch reads MESVHMKIEE…TFLVDKYEIL (241 aa). 2 positions are modified to N6-acetyllysine: lysine 309 and lysine 351. Position 493 is a phosphoserine (serine 493).

It belongs to the adaptor complexes medium subunit family. Delta-COP subfamily. Oligomeric complex that consists of at least the alpha, beta, beta', gamma, delta, epsilon and zeta subunits. In terms of tissue distribution, ubiquitously expressed.

The protein localises to the cytoplasm. Its subcellular location is the golgi apparatus membrane. It is found in the cytoplasmic vesicle. The protein resides in the COPI-coated vesicle membrane. Functionally, the coatomer is a cytosolic protein complex that binds to dilysine motifs and reversibly associates with Golgi non-clathrin-coated vesicles, which further mediate biosynthetic protein transport from the ER, via the Golgi up to the trans Golgi network. Coatomer complex is required for budding from Golgi membranes, and is essential for the retrograde Golgi-to-ER transport of dilysine-tagged proteins. In mammals, the coatomer can only be recruited by membranes associated to ADP-ribosylation factors (ARFs), which are small GTP-binding proteins; the complex also influences the Golgi structural integrity, as well as the processing, activity, and endocytic recycling of LDL receptors. The protein is Coatomer subunit delta (ARCN1) of Bos taurus (Bovine).